Consider the following 136-residue polypeptide: SNARE-associated protein Snapin (136 aa).

At Ala2 the chain carries N-acetylalanine. Ser10 carries the post-translational modification Phosphoserine. Thr14 carries the phosphothreonine modification. Residues 37–126 (VQQLDSHVHA…TARRRAMLDS (90 aa)) are a coiled coil. Ser50 is subject to Phosphoserine; by PKA. Positions 83–136 (KKLLNARRRVVLVNNILQNAQERLRRLNHSVAKETARRRAMLDSGIYPPGSPGK) are interaction with TOR1A. Residue Ser126 is modified to Phosphoserine. The residue at position 129 (Tyr129) is a Phosphotyrosine. Ser133 is modified (phosphoserine).

The protein belongs to the SNAPIN family. As to quaternary structure, component of the biogenesis of lysosome-related organelles complex 1 (BLOC-1) composed of BLOC1S1, BLOC1S2, BLOC1S3, BLOC1S4, BLOC1S5, BLOC1S6, DTNBP1/BLOC1S7 and SNAPIN/BLOC1S8. Octamer composed of one copy each BLOC1S1, BLOC1S2, BLOC1S3, BLOC1S4, BLOC1S5, BLOC1S6, DTNBP1/BLOC1S7 and SNAPIN/BLOC1S8. The BLOC-1 complex associates with the AP-3 protein complex and membrane protein cargos. Component of the BLOC-one-related complex (BORC) which is composed of BLOC1S1, BLOC1S2, BORCS5, BORCS6, BORCS7, BORCS8, KXD1 and SNAPIN. Associates with the SNARE complex. Interacts with CSNK1D, SNAP23 and STX4A but not with STX1A, VAMP2 and SYT1. Interacts with SNAP25; the interaction with SNAP25 is increased by its phosphorylation. Interacts with CNTRL, NANOS1, PUM2 and RGS7. Interacts with TOR1A; the interaction is direct and associates SNAPIN with the CSN complex. In terms of assembly, (Microbial infection) Interacts with human cytomegalovirus/HHV-5 protein UL70. Post-translationally, phosphorylated by CSNK1D/CK1. Phosphorylated by PKD, phosphorylation controls SNAPIN protein stability. Expressed in male germ cells of adult testis (at protein level).

The protein localises to the membrane. It localises to the cytoplasm. Its subcellular location is the cytosol. The protein resides in the perinuclear region. It is found in the golgi apparatus membrane. The protein localises to the lysosome membrane. It localises to the cytoplasmic vesicle. Its subcellular location is the secretory vesicle. The protein resides in the synaptic vesicle membrane. Component of the BLOC-1 complex, a complex that is required for normal biogenesis of lysosome-related organelles (LRO), such as platelet dense granules and melanosomes. In concert with the AP-3 complex, the BLOC-1 complex is required to target membrane protein cargos into vesicles assembled at cell bodies for delivery into neurites and nerve terminals. The BLOC-1 complex, in association with SNARE proteins, is also proposed to be involved in neurite extension. Plays a role in intracellular vesicle trafficking and synaptic vesicle recycling. May modulate a step between vesicle priming, fusion and calcium-dependent neurotransmitter release through its ability to potentiate the interaction of synaptotagmin with the SNAREs and the plasma-membrane-associated protein SNAP25. Its phosphorylation state influences exocytotic protein interactions and may regulate synaptic vesicle exocytosis. May also have a role in the mechanisms of SNARE-mediated membrane fusion in non-neuronal cells. As part of the BORC complex may play a role in lysosomes movement and localization at the cell periphery. Associated with the cytosolic face of lysosomes, the BORC complex may recruit ARL8B and couple lysosomes to microtubule plus-end-directed kinesin motor. This is SNARE-associated protein Snapin (SNAPIN) from Homo sapiens (Human).